We begin with the raw amino-acid sequence, 249 residues long: MSLMREMLEAGVHFGHQTRYWNPKMAPYIFGHRNKIHIINLEQTVAKYQEASKFVKQLVARGGNILFVGTKRAARELVATEAARCGMPYVDARWLGGMLTNFKTVKSSIKRLKDMEAMVADGGFERMTKKEGLLFQRELDKLNKSIGGIKDMNGLPDALFVIDVGYHKIAVAEAKVLGIPVVAVVDTNHSPDGIDHVIPGNDDSARAIALYAKGMADAVLEGREQNINGLVEEIGEGQEEFVEVQDNQA.

Belongs to the universal ribosomal protein uS2 family.

This chain is Small ribosomal subunit protein uS2, found in Bordetella parapertussis (strain 12822 / ATCC BAA-587 / NCTC 13253).